Consider the following 462-residue polypeptide: Glycoprotein endo-alpha-1,2-mannosidase (462 aa).

Topologically, residues Met1–Thr8 are cytoplasmic. The helical; Signal-anchor for type II membrane protein transmembrane segment at Cys9–Leu29 threads the bilayer. Residues Arg30–Ser462 are Lumenal-facing. The tract at residues Asp60–Ser462 is catalytic.

Belongs to the glycosyl hydrolase 99 family. Post-translationally, undergoes proteolytic cleavage in the C-terminal region.

The protein localises to the golgi apparatus membrane. The enzyme catalyses N-{alpha-Glc-(1-&gt;3)-alpha-Man-(1-&gt;2)-alpha-Man-(1-&gt;2)-alpha-Man-(1-&gt;3)-[alpha-Man-(1-&gt;2)-alpha-Man-(1-&gt;3)-[alpha-Man-(1-&gt;2)-alpha-Man-(1-&gt;6)]-alpha-Man-(1-&gt;6)]-beta-Man-(1-&gt;4)-beta-GlcNAc-(1-&gt;4)-beta-GlcNAc}-L-asparaginyl-[protein] + H2O = alpha-D-glucosyl-(1-&gt;3)-D-mannopyranose + N(4)-{alpha-D-Man-(1-&gt;2)-alpha-D-Man-(1-&gt;3)-[alpha-D-Man-(1-&gt;2)-alpha-D-Man-(1-&gt;3)-[alpha-D-Man-(1-&gt;2)-alpha-D-Man-(1-&gt;6)]-alpha-D-Man-(1-&gt;6)]-beta-D-Man-(1-&gt;4)-beta-D-GlaNAc-(1-&gt;4)-beta-D-GlcNAc}-L-asparaginyl-[protein] (N-glucan mannose isomer 8A1,2,3B1,2). The polypeptide is Glycoprotein endo-alpha-1,2-mannosidase (MANEA) (Pongo abelii (Sumatran orangutan)).